A 186-amino-acid polypeptide reads, in one-letter code: uncharacterized protein (186 aa).

This sequence to M.jannaschii MJ0208.

This is an uncharacterized protein from Methanocaldococcus jannaschii (strain ATCC 43067 / DSM 2661 / JAL-1 / JCM 10045 / NBRC 100440) (Methanococcus jannaschii).